A 229-amino-acid polypeptide reads, in one-letter code: DNA polymerase III subunit epsilon (229 aa).

2 residues coordinate a divalent metal cation: Asp10 and Glu12. Substrate contacts are provided by Asp10, Glu12, Asp55, and His60. His156 (proton acceptor) is an active-site residue. Asp161 lines the a divalent metal cation pocket. Asp161 lines the substrate pocket.

As to quaternary structure, DNA polymerase III contains a core (composed of alpha, epsilon and theta chains) that associates with a tau subunit. This core dimerizes to form the POLIII' complex. PolIII' associates with the gamma complex (composed of gamma, delta, delta', psi and chi chains) and with the beta chain to form the complete DNA polymerase III complex. The cofactor is Mg(2+). It depends on Mn(2+) as a cofactor.

It carries out the reaction DNA(n) + a 2'-deoxyribonucleoside 5'-triphosphate = DNA(n+1) + diphosphate. Its function is as follows. DNA polymerase III is a complex, multichain enzyme responsible for most of the replicative synthesis in bacteria. The epsilon subunit contain the editing function and is a proofreading 3'-5' exonuclease. In Rickettsia felis (strain ATCC VR-1525 / URRWXCal2) (Rickettsia azadi), this protein is DNA polymerase III subunit epsilon (dnaQ).